A 580-amino-acid chain; its full sequence is F-box only protein 24 (580 aa).

In terms of domain architecture, F-box spans Pro-36–Ile-82. An RCC1 repeat occupies Gly-376–Ser-425.

In terms of assembly, directly interacts with SKP1 and CUL1.

Its function is as follows. Substrate-recognition component of the SCF (SKP1-CUL1-F-box protein)-type E3 ubiquitin ligase complex. The chain is F-box only protein 24 (FBXO24) from Homo sapiens (Human).